The primary structure comprises 261 residues: 5'-nucleotidase SurE (261 aa).

A divalent metal cation is bound by residues D17, D18, S48, and N104.

It belongs to the SurE nucleotidase family. The cofactor is a divalent metal cation.

Its subcellular location is the cytoplasm. It carries out the reaction a ribonucleoside 5'-phosphate + H2O = a ribonucleoside + phosphate. Its function is as follows. Nucleotidase that shows phosphatase activity on nucleoside 5'-monophosphates. In Deinococcus geothermalis (strain DSM 11300 / CIP 105573 / AG-3a), this protein is 5'-nucleotidase SurE.